The sequence spans 313 residues: Solute carrier family 25 member 36 (313 aa).

Solcar repeat units lie at residues 4-110, 118-205, and 226-310; these read RDTL…CKEK, DSTQ…IKRK, and SDFV…VVYL. 6 consecutive transmembrane segments (helical) span residues 7–27, 41–57, 113–133, 182–202, 228–248, and 293–313; these read LVHLFAGGCGGTVGAILTCPL, LYISEVHLNTVNGASVN, NIFNPDSTQVHMISAGVAGFT, MSASYAGISETVIHFVIYESI, FVGMMMAAATSKTCATSIAYP, and QIPNTAIMMSTYEVVVYLLDG.

Belongs to the mitochondrial carrier (TC 2.A.29) family.

The protein localises to the mitochondrion inner membrane. Its function is as follows. Mitochondrial transporter that imports/exports pyrimidine nucleotides into and from mitochondria. Transports preferentially cytosine and uracil (deoxy)nucleoside mono-, di-, and triphosphates by uniport and antiport mechanism. This Gallus gallus (Chicken) protein is Solute carrier family 25 member 36 (SLC25A36).